Here is a 573-residue protein sequence, read N- to C-terminus: Sulfate adenylyltransferase (573 aa).

An N-terminal region spans residues methionine 1–tyrosine 169. The segment at aspartate 170 to threonine 394 is catalytic. Residue glutamine 197 participates in sulfate binding. Residues glutamine 197–asparagine 200 and glycine 291–histidine 294 contribute to the ATP site. Catalysis depends on residues threonine 198, arginine 199, and asparagine 200. Arginine 199 contacts sulfate. Alanine 295 is a binding site for sulfate. Valine 333 contacts ATP. The interval glutamine 395–alanine 573 is allosteric regulation domain; adenylyl-sulfate kinase-like. Residues aspartate 434–arginine 437, arginine 451, isoleucine 477–alanine 478, and arginine 515 contribute to the 3'-phosphoadenylyl sulfate site.

In the N-terminal section; belongs to the sulfate adenylyltransferase family. This sequence in the C-terminal section; belongs to the APS kinase family. Homohexamer. Dimer of trimers.

It is found in the cytoplasm. It catalyses the reaction sulfate + ATP + H(+) = adenosine 5'-phosphosulfate + diphosphate. The protein operates within sulfur metabolism; hydrogen sulfide biosynthesis; sulfite from sulfate: step 1/3. With respect to regulation, allosterically inhibited by 3'-phosphoadenosine 5'-phosphosulfate (PAPS). Its function is as follows. Catalyzes the first intracellular reaction of sulfate assimilation, forming adenosine-5'-phosphosulfate (APS) from inorganic sulfate and ATP. Plays an important role in sulfate activation as a component of the biosynthesis pathway of sulfur-containing amino acids. In Aspergillus oryzae (strain ATCC 42149 / RIB 40) (Yellow koji mold), this protein is Sulfate adenylyltransferase.